Reading from the N-terminus, the 172-residue chain is Transcriptional repressor NrdR (172 aa).

Residues 3–34 (CPFCSYSDNRVLESRLAEEGESVRRRRECKQC) fold into a zinc finger. One can recognise an ATP-cone domain in the interval 49 to 139 (TVVIKRNGRR…VYRKFKGVAD (91 aa)).

The protein belongs to the NrdR family. Zn(2+) is required as a cofactor.

Negatively regulates transcription of bacterial ribonucleotide reductase nrd genes and operons by binding to NrdR-boxes. This Gloeobacter violaceus (strain ATCC 29082 / PCC 7421) protein is Transcriptional repressor NrdR.